Here is a 109-residue protein sequence, read N- to C-terminus: uncharacterized protein (109 aa).

An HTH cro/C1-type domain is found at 42 to 100; the sequence is LEEKLKQEKIDRKYLAEVTNIPYTTVSRIMRAEANREFNPEIDTILKIAKYFNCTMDEV. A DNA-binding region (H-T-H motif) is located at residues 53–72; the sequence is RKYLAEVTNIPYTTVSRIMR.

This is an uncharacterized protein from Rickettsia conorii (strain ATCC VR-613 / Malish 7).